The primary structure comprises 884 residues: MHGEHDRGGVIIKVCDDVLALAGKHERAINLTKLDNTLEQHTPMMRQYLGIKAQYPDMLVFYRMGDFYELFHDDAEKASRLLGITLTKRGSSNGEPIRMAGVPYHAAEQYLAKLAKLGEAVAICEQVGDPAKSKGPVERQVTRILTPGTLTDAALLDDTRDNLLLAIAHGEGVLGLARINLASGRFILSEITPGLLAQELERISPAEILYPDDFYHMALEQVKCPKKRLAPWQFDLDSSIQTLTKQFSTYDLDGFGCAHMLAAIMAAGALLDYVKHTQRTSLPHIQSLMVEQGSQFIQLDAATRRNLEIDQTLRGESSPTLYSLLNTTVTAMGARLLRSWLHHPLQHQADIQARLQAVKVLQAQYDGLRPLLRNVGDIERMAARVALKTARPRDLSGLRDSLQQLPALQRVLRPEDSALLHSLQQQLDVPQAALDMLIAAIKDEPAAVLREGGVIADGFDAELDELRAIQSNCGEFLLQFEAQERERSGISNLKVEYNSVHGFYIEISRAQSENVPAEYRRRQTLKNVERYITPELKTFEDKVLSANERALAREKFLFDELLGNLQPALAAWQRNAEAVAQLDVLATFAERADVLKYVAPQFSSEAGLDIVDGRHPVVEQLAQPFIANSVSLSPYRQLLLITGPNMGGKSTYMRQTALIVLLAHCGCFVPAKSARIGPIDRIFTRIGASDDLAGGRSTFMVEMTETANILHNATERSLVLLDEIGRGTSTFDGLSLAWAVARQLLEKNRSYTLFATHYFELTRISEEFKHAANVHLDAVEHGDGIVFLHNVEEGPASQSYGLQVAQLAGIPRTVVNAAKRKLVQLEQSQVMQQSLAGQGDMFVAANVEPEPATHPVVSELESIDPDSLTPRQALDVLYKLKKLI.

ATP is bound at residue 643–650 (GPNMGGKS).

This sequence belongs to the DNA mismatch repair MutS family.

This protein is involved in the repair of mismatches in DNA. It is possible that it carries out the mismatch recognition step. This protein has a weak ATPase activity. The sequence is that of DNA mismatch repair protein MutS from Methylobacillus flagellatus (strain ATCC 51484 / DSM 6875 / VKM B-1610 / KT).